Consider the following 137-residue polypeptide: Altered inheritance of mitochondria protein 11 (137 aa).

The next 2 helical transmembrane spans lie at 20–37 (YGAA…SRAI) and 66–88 (LTYA…CWAL).

The protein belongs to the AIM11 family.

It is found in the membrane. The polypeptide is Altered inheritance of mitochondria protein 11 (AIM11) (Saccharomyces cerevisiae (strain RM11-1a) (Baker's yeast)).